The primary structure comprises 39 residues: uncharacterized protein (39 aa).

Belongs to the asfivirus C84L family.

This is an uncharacterized protein from African swine fever virus (isolate Warthog/Namibia/Wart80/1980) (ASFV).